Reading from the N-terminus, the 127-residue chain is Thioredoxin (127 aa).

The Thioredoxin domain maps to 2–115 (SDGVKHINSA…LRAAAEKMGR (114 aa)). Residues cysteine 33 and cysteine 36 each act as nucleophile in the active site. Cysteine 33 and cysteine 36 are joined by a disulfide.

It belongs to the thioredoxin family.

Functionally, participates in various redox reactions through the reversible oxidation of its active center dithiol to a disulfide and catalyzes dithiol-disulfide exchange reactions. This is Thioredoxin (trx) from Neurospora crassa (strain ATCC 24698 / 74-OR23-1A / CBS 708.71 / DSM 1257 / FGSC 987).